The chain runs to 459 residues: MTNYAIILAAGKGTRMKSDLPKVLHKVAGISMLEHVFRSVSAIDPEKTVTVVGHKAELVEQVLAGQTDFVRQTEQLGTGHAVMMAEPVLENLTGQTLVIAGDTPLITGESLKNLIDFHINHKNVATILTAEADNPFGYGRIVRNQHDEVLKIVEQKDASDFEQQIKEINTGTYVFDNARLFEALKNINTNNAQGEYYITDVIGIFRENGEKVGAYTLKDFDESLGVNDRVALATAESVMRRRINQQHMVNGVSFVNPHATYIGVDVEIAPEVQVEANVTLKGQTKIGAETILTNGTYIVDSVIGERTVITNSMIEESSVADGVTVGPYAHIRPGSSLAKDVHVGNFVEVKGSSIGENTKAGHLTYIGNSEVGANVNFGAGTITVNYDGQKKYKTIIGDNVFVGSNSTIIAPVELGDNSLVGAGSTITKDVPADAIALGRGRQINKEDYAKRLPHHPQNK.

The tract at residues 1 to 229 (MTNYAIILAA…FDESLGVNDR (229 aa)) is pyrophosphorylase. UDP-N-acetyl-alpha-D-glucosamine-binding positions include 8–11 (LAAG), lysine 22, glutamine 72, and 77–78 (GT). Position 102 (aspartate 102) interacts with Mg(2+). 4 residues coordinate UDP-N-acetyl-alpha-D-glucosamine: glycine 139, glutamate 154, asparagine 169, and asparagine 227. Asparagine 227 is a Mg(2+) binding site. The interval 230–250 (VALATAESVMRRRINQQHMVN) is linker. The segment at 251–459 (GVSFVNPHAT…KRLPHHPQNK (209 aa)) is N-acetyltransferase. Arginine 332 and lysine 350 together coordinate UDP-N-acetyl-alpha-D-glucosamine. Residue histidine 362 is the Proton acceptor of the active site. UDP-N-acetyl-alpha-D-glucosamine is bound by residues tyrosine 365 and asparagine 376. Residues alanine 379, 385-386 (NY), serine 404, alanine 422, and arginine 439 contribute to the acetyl-CoA site.

In the N-terminal section; belongs to the N-acetylglucosamine-1-phosphate uridyltransferase family. The protein in the C-terminal section; belongs to the transferase hexapeptide repeat family. Homotrimer. The cofactor is Mg(2+).

The protein localises to the cytoplasm. It carries out the reaction alpha-D-glucosamine 1-phosphate + acetyl-CoA = N-acetyl-alpha-D-glucosamine 1-phosphate + CoA + H(+). It catalyses the reaction N-acetyl-alpha-D-glucosamine 1-phosphate + UTP + H(+) = UDP-N-acetyl-alpha-D-glucosamine + diphosphate. It participates in nucleotide-sugar biosynthesis; UDP-N-acetyl-alpha-D-glucosamine biosynthesis; N-acetyl-alpha-D-glucosamine 1-phosphate from alpha-D-glucosamine 6-phosphate (route II): step 2/2. The protein operates within nucleotide-sugar biosynthesis; UDP-N-acetyl-alpha-D-glucosamine biosynthesis; UDP-N-acetyl-alpha-D-glucosamine from N-acetyl-alpha-D-glucosamine 1-phosphate: step 1/1. Its pathway is bacterial outer membrane biogenesis; LPS lipid A biosynthesis. In terms of biological role, catalyzes the last two sequential reactions in the de novo biosynthetic pathway for UDP-N-acetylglucosamine (UDP-GlcNAc). The C-terminal domain catalyzes the transfer of acetyl group from acetyl coenzyme A to glucosamine-1-phosphate (GlcN-1-P) to produce N-acetylglucosamine-1-phosphate (GlcNAc-1-P), which is converted into UDP-GlcNAc by the transfer of uridine 5-monophosphate (from uridine 5-triphosphate), a reaction catalyzed by the N-terminal domain. This Streptococcus sanguinis (strain SK36) protein is Bifunctional protein GlmU.